Consider the following 348-residue polypeptide: UPF0324 membrane protein BH02290 (348 aa).

Helical transmembrane passes span 13–35, 45–67, 74–96, 106–128, 135–157, 167–189, 196–218, 223–245, 257–275, 285–307, and 319–341; these read AFLN…AYGL, QAWL…CFTL, GITF…SISV, LLAS…GRLF, AMLV…APVI, SIAF…HPFL, YGVL…ASVS, QIAT…ALSI, LHTL…MLIR, LIPI…GLGV, and VILA…IQLN.

This sequence belongs to the UPF0324 family.

The protein localises to the cell membrane. In Bartonella henselae (strain ATCC 49882 / DSM 28221 / CCUG 30454 / Houston 1) (Rochalimaea henselae), this protein is UPF0324 membrane protein BH02290.